The following is a 400-amino-acid chain: MAKAKFERVKPHVNIGTIGHVDHGKTTLTAAITTVLAKKGLAQQKRYDEIDNAPEERERGITINTAHVEYETEKRHYAHVDCPGHADYVKNMITGAAQMDGAILVVSAADGPMPQTREHILLARQVGVPYIVVFLNKADMVDDPELMELVEMEVRDLLSTYEFPGDEVPVVAGSALKALECGCGKEDCPWCGKILELMDKVDEYIPTPQRDVDKPFLMPVEDVFTITGRGTVATGRVERGRITIGEEVEIVGLMDAPRKTVVTGLEMFRKVLDEAVAGDNIGALLRGVDRKEIERGQVLAKPGTIKPHRKFFAEVYVLTKEEGGRHTPFFNGYRPQFYFRTTDVTGVIHLPEGVEMVMPGDNVKIHIELITPIAIEEGLRFAIREGGRTVGAGVVTAIEE.

The region spanning 10–209 is the tr-type G domain; sequence KPHVNIGTIG…KVDEYIPTPQ (200 aa). The interval 19–26 is G1; the sequence is GHVDHGKT. Residue 19-26 coordinates GTP; that stretch reads GHVDHGKT. Thr26 provides a ligand contact to Mg(2+). A G2 region spans residues 60–64; it reads GITIN. Residues 81-84 are G3; that stretch reads DCPG. GTP contacts are provided by residues 81 to 85 and 136 to 139; these read DCPGH and NKAD. Positions 136–139 are G4; sequence NKAD. The segment at 174–176 is G5; it reads SAL.

Belongs to the TRAFAC class translation factor GTPase superfamily. Classic translation factor GTPase family. EF-Tu/EF-1A subfamily. Monomer.

It is found in the cytoplasm. The enzyme catalyses GTP + H2O = GDP + phosphate + H(+). Its function is as follows. GTP hydrolase that promotes the GTP-dependent binding of aminoacyl-tRNA to the A-site of ribosomes during protein biosynthesis. This Carboxydothermus hydrogenoformans (strain ATCC BAA-161 / DSM 6008 / Z-2901) protein is Elongation factor Tu 2.